Here is a 473-residue protein sequence, read N- to C-terminus: Photosystem II CP43 reaction center protein (473 aa).

Positions 1-14 (MKTLYSLRRFYPVE) are excised as a propeptide. T15 bears the N-acetylthreonine mark. Position 15 is a phosphothreonine (T15). Transmembrane regions (helical) follow at residues 69 to 93 (LFEV…PHLA), 134 to 155 (LLGP…KDRN), 178 to 200 (KALY…RKIT), 255 to 275 (KPFA…LSYS), and 291 to 312 (WFNN…ASQA). Residue E367 participates in [CaMn4O5] cluster binding. Residues 447–471 (RARAAAAGFEKGIDRDFEPVLSMTP) traverse the membrane as a helical segment.

It belongs to the PsbB/PsbC family. PsbC subfamily. In terms of assembly, PSII is composed of 1 copy each of membrane proteins PsbA, PsbB, PsbC, PsbD, PsbE, PsbF, PsbH, PsbI, PsbJ, PsbK, PsbL, PsbM, PsbT, PsbX, PsbY, PsbZ, Psb30/Ycf12, at least 3 peripheral proteins of the oxygen-evolving complex and a large number of cofactors. It forms dimeric complexes. Binds multiple chlorophylls and provides some of the ligands for the Ca-4Mn-5O cluster of the oxygen-evolving complex. It may also provide a ligand for a Cl- that is required for oxygen evolution. PSII binds additional chlorophylls, carotenoids and specific lipids. serves as cofactor.

Its subcellular location is the plastid. The protein resides in the chloroplast thylakoid membrane. Its function is as follows. One of the components of the core complex of photosystem II (PSII). It binds chlorophyll and helps catalyze the primary light-induced photochemical processes of PSII. PSII is a light-driven water:plastoquinone oxidoreductase, using light energy to abstract electrons from H(2)O, generating O(2) and a proton gradient subsequently used for ATP formation. The sequence is that of Photosystem II CP43 reaction center protein from Lactuca sativa (Garden lettuce).